A 362-amino-acid polypeptide reads, in one-letter code: 3-dehydroquinate synthase (362 aa).

NAD(+) is bound by residues 71–76 (DGEQYK), 105–109 (GVIGD), 129–130 (TT), K142, K151, and 169–172 (CLKT). Positions 184, 247, and 264 each coordinate Zn(2+).

The protein belongs to the sugar phosphate cyclases superfamily. Dehydroquinate synthase family. It depends on Co(2+) as a cofactor. Zn(2+) is required as a cofactor. Requires NAD(+) as cofactor.

The protein localises to the cytoplasm. It carries out the reaction 7-phospho-2-dehydro-3-deoxy-D-arabino-heptonate = 3-dehydroquinate + phosphate. It functions in the pathway metabolic intermediate biosynthesis; chorismate biosynthesis; chorismate from D-erythrose 4-phosphate and phosphoenolpyruvate: step 2/7. Catalyzes the conversion of 3-deoxy-D-arabino-heptulosonate 7-phosphate (DAHP) to dehydroquinate (DHQ). In Salmonella enteritidis PT4 (strain P125109), this protein is 3-dehydroquinate synthase.